The following is a 100-amino-acid chain: Large ribosomal subunit protein uL23 (100 aa).

It belongs to the universal ribosomal protein uL23 family. As to quaternary structure, part of the 50S ribosomal subunit. Contacts protein L29, and trigger factor when it is bound to the ribosome.

Its function is as follows. One of the early assembly proteins it binds 23S rRNA. One of the proteins that surrounds the polypeptide exit tunnel on the outside of the ribosome. Forms the main docking site for trigger factor binding to the ribosome. The sequence is that of Large ribosomal subunit protein uL23 from Shewanella pealeana (strain ATCC 700345 / ANG-SQ1).